Here is a 651-residue protein sequence, read N- to C-terminus: Acetyl-coenzyme A synthetase (651 aa).

CoA contacts are provided by residues R191–K194, T311, and N335. ATP-binding positions include G387–P389, D411–T416, D500, and R515. Position 523 (S523) interacts with CoA. R526 provides a ligand contact to ATP. Residues V537, H539, and V542 each coordinate Mg(2+). R584 contacts CoA. N6-acetyllysine is present on K609.

Belongs to the ATP-dependent AMP-binding enzyme family. Mg(2+) serves as cofactor. In terms of processing, acetylated. Deacetylation by the SIR2-homolog deacetylase activates the enzyme.

It carries out the reaction acetate + ATP + CoA = acetyl-CoA + AMP + diphosphate. Functionally, catalyzes the conversion of acetate into acetyl-CoA (AcCoA), an essential intermediate at the junction of anabolic and catabolic pathways. AcsA undergoes a two-step reaction. In the first half reaction, AcsA combines acetate with ATP to form acetyl-adenylate (AcAMP) intermediate. In the second half reaction, it can then transfer the acetyl group from AcAMP to the sulfhydryl group of CoA, forming the product AcCoA. The chain is Acetyl-coenzyme A synthetase from Pseudomonas savastanoi pv. phaseolicola (strain 1448A / Race 6) (Pseudomonas syringae pv. phaseolicola (strain 1448A / Race 6)).